Consider the following 87-residue polypeptide: UPF0250 protein CKO_02527 (87 aa).

This sequence belongs to the UPF0250 family.

In Citrobacter koseri (strain ATCC BAA-895 / CDC 4225-83 / SGSC4696), this protein is UPF0250 protein CKO_02527.